The primary structure comprises 164 residues: UPF0251 protein MM_1448 (164 aa).

Residues 91 to 100 are compositionally biased toward basic and acidic residues; sequence GDYRMPRGDR. Residues 91-123 form a disordered region; the sequence is GDYRMPRGDRTGPAGQGPAGGGRGRGQGKGRGG. Residues 104 to 115 show a composition bias toward gly residues; sequence AGQGPAGGGRGR.

The protein belongs to the UPF0251 family.

This is UPF0251 protein MM_1448 from Methanosarcina mazei (strain ATCC BAA-159 / DSM 3647 / Goe1 / Go1 / JCM 11833 / OCM 88) (Methanosarcina frisia).